Consider the following 258-residue polypeptide: Ribonuclease HII (258 aa).

Residues 71–258 (ELIAGIDEVG…PIKSMVNFKY (188 aa)) enclose the RNase H type-2 domain. A divalent metal cation-binding residues include D77, E78, and D169.

Belongs to the RNase HII family. The cofactor is Mn(2+). Mg(2+) is required as a cofactor.

Its subcellular location is the cytoplasm. It carries out the reaction Endonucleolytic cleavage to 5'-phosphomonoester.. Its function is as follows. Endonuclease that specifically degrades the RNA of RNA-DNA hybrids. This is Ribonuclease HII from Lactococcus lactis subsp. cremoris (strain SK11).